Here is a 244-residue protein sequence, read N- to C-terminus: Small ribosomal subunit protein eS4 (244 aa).

Residues 1 to 14 (MANKGPRKHLKRLP) show a composition bias toward basic residues. The interval 1 to 36 (MANKGPRKHLKRLPAPKNWQISRKTNKYTTRPSAGP) is disordered. A compositionally biased stretch (polar residues) spans 19 to 32 (WQISRKTNKYTTRP). The S4 RNA-binding domain occupies 43–106 (LPLLLVLRDL…NESFLVVLDE (64 aa)).

Belongs to the eukaryotic ribosomal protein eS4 family.

In Methanococcus aeolicus (strain ATCC BAA-1280 / DSM 17508 / OCM 812 / Nankai-3), this protein is Small ribosomal subunit protein eS4.